We begin with the raw amino-acid sequence, 248 residues long: Glycoprotein BILF2 (248 aa).

Positions 1-17 (MTHLVLLLCCCVGSVCA) are cleaved as a signal peptide. An Ig-like domain is found at 19-125 (FSDLVKFENV…NVTLRNCSVA (107 aa)). 12 N-linked (GlcNAc...) asparagine; by host glycosylation sites follow: asparagine 27, asparagine 37, asparagine 45, asparagine 73, asparagine 83, asparagine 92, asparagine 95, asparagine 104, asparagine 116, asparagine 121, asparagine 131, and asparagine 144. A disulfide bond links cysteine 40 and cysteine 115. Positions 167–191 (VSHTTSTSHRPHRRPVSKRPTHKPV) are disordered. A compositionally biased stretch (basic residues) spans 175–188 (HRPHRRPVSKRPTH). The helical transmembrane segment at 210 to 230 (WALLLITCAVVAPVLLIIIIS) threads the bilayer.

It belongs to the Epstein-Barr virus BILF2 protein family.

Its subcellular location is the membrane. The protein is Glycoprotein BILF2 of Epstein-Barr virus (strain B95-8) (HHV-4).